We begin with the raw amino-acid sequence, 1100 residues long: Serine/threonine/tyrosine-interacting-like protein 2 (1100 aa).

Positions 1–12 are enriched in polar residues; sequence MASSVEDQQLQQ. The tract at residues 1–21 is disordered; that stretch reads MASSVEDQQLQQEEAESVKDV. The region spanning 141 to 289 is the Tyrosine-protein phosphatase domain; that stretch reads SPVDEVWPNV…LRQLNETLME (149 aa). Residues 356-374 are compositionally biased toward polar residues; sequence CGSQQPNMQQPADQPSLPG. Disordered stretches follow at residues 356–383, 411–436, 479–504, 542–561, 575–615, 667–686, 888–1060, and 1075–1100; these read CGSQ…EDGD, EDED…TSED, AAAR…DDVQ, KENA…APDL, KQQK…ERSR, VLSG…TPAP, CEKP…DEEI, and VAEE…HDHK. Residues 418 to 428 show a composition bias toward basic and acidic residues; the sequence is DKTQRAVRPDD. Residues 580–615 show a composition bias toward basic and acidic residues; it reads HGGEENKEEILQMSRGEDTATARRRQRREEVLERSR. Over residues 667 to 676 the composition is skewed to low complexity; sequence VLSGRSTRSL. The segment covering 888-898 has biased composition (basic and acidic residues); the sequence is CEKPKPKRDYG. Polar residues-rich tracts occupy residues 907–916, 994–1013, and 1029–1041; these read ASANNPTSSI, SYSS…TSFA, and FQNH…SSVY. Residues 1089–1100 are compositionally biased toward basic and acidic residues; it reads RKQEESKSHDHK.

This sequence belongs to the protein-tyrosine phosphatase family. Non-receptor class dual specificity subfamily. In terms of tissue distribution, expressed in muscle fibers in a regular striated pattern (at protein level).

It localises to the cytoplasm. Its subcellular location is the myofibril. The protein resides in the sarcomere. Its function is as follows. Required for myofiber maturation. This Danio rerio (Zebrafish) protein is Serine/threonine/tyrosine-interacting-like protein 2 (styxl2).